We begin with the raw amino-acid sequence, 144 residues long: Large ribosomal subunit protein uL15 (144 aa).

Residues methionine 1–arginine 59 are disordered. The span at arginine 21–glycine 31 shows a compositional bias: gly residues.

Belongs to the universal ribosomal protein uL15 family. Part of the 50S ribosomal subunit.

Its function is as follows. Binds to the 23S rRNA. The protein is Large ribosomal subunit protein uL15 of Pseudoalteromonas atlantica (strain T6c / ATCC BAA-1087).